The primary structure comprises 402 residues: uncharacterized protein (402 aa).

Over 1–12 the chain is Cytoplasmic; that stretch reads MFQQLSASIRHN. Residues 13-33 traverse the membrane as a helical segment; the sequence is AHIIFLCISWYFISSLASQVT. The Extracellular segment spans residues 34–50; the sequence is KQVLTVCPLPLFLGEFQ. Residues 51 to 71 traverse the membrane as a helical segment; the sequence is FIYTAVLAWFTCYIAYSFPGF. Residues 72–103 are Cytoplasmic-facing; sequence YRIFPNGTFPEYYIDDRETSRAARKESKLSSL. Residues 104–124 form a helical membrane-spanning segment; it reads IIPPSKPILQTVLPLGLFQFV. The Extracellular segment spans residues 125–134; the sequence is GKYFGHTATS. A helical transmembrane segment spans residues 135 to 155; it reads LVPVSTVASIKTLSPMFILLL. The Cytoplasmic portion of the chain corresponds to 156-165; it reads QKILKISTLK. A helical membrane pass occupies residues 166 to 186; sequence ITLTLIFSLCTLVLGVWIIVQ. Over 187-206 the chain is Extracellular; it reads EDNRSPASSNELREFSKYGV. A helical membrane pass occupies residues 207–227; the sequence is ICAMISMFIFVLQNIYGKTVF. Residues 228-271 lie on the Cytoplasmic side of the membrane; sequence TYRSQTDESQSNSGFSRQESPLPLYEKLDEKLVAKKKPKSYDKL. A helical membrane pass occupies residues 272–292; it reads TLMIYISLVGFCLSFGWFITL. At 293–353 the chain is on the extracellular side; the sequence is EFPVLFRYFF…TYSIANLMKR (61 aa). A helical transmembrane segment spans residues 354–374; it reads FAIIAVSWVFIGRRITWLQVF. The Cytoplasmic portion of the chain corresponds to 375 to 402; sequence GLVLNTLGLFLYERCTSQSKIKAKIRPE.

The protein belongs to the TPT transporter family.

Its subcellular location is the membrane. This is an uncharacterized protein from Saccharomyces cerevisiae (strain ATCC 204508 / S288c) (Baker's yeast).